The following is a 416-amino-acid chain: UDP-N-acetylglucosamine 1-carboxyvinyltransferase (416 aa).

A phosphoenolpyruvate-binding site is contributed by 22–23; that stretch reads KN. Residue Arg92 coordinates UDP-N-acetyl-alpha-D-glucosamine. Residue Cys116 is the Proton donor of the active site. Residue Cys116 is modified to 2-(S-cysteinyl)pyruvic acid O-phosphothioketal. Residues 121 to 125, Asp304, and Ile326 contribute to the UDP-N-acetyl-alpha-D-glucosamine site; that span reads RPVDQ.

The protein belongs to the EPSP synthase family. MurA subfamily.

The protein resides in the cytoplasm. It catalyses the reaction phosphoenolpyruvate + UDP-N-acetyl-alpha-D-glucosamine = UDP-N-acetyl-3-O-(1-carboxyvinyl)-alpha-D-glucosamine + phosphate. It participates in cell wall biogenesis; peptidoglycan biosynthesis. Its function is as follows. Cell wall formation. Adds enolpyruvyl to UDP-N-acetylglucosamine. This chain is UDP-N-acetylglucosamine 1-carboxyvinyltransferase, found in Cupriavidus taiwanensis (strain DSM 17343 / BCRC 17206 / CCUG 44338 / CIP 107171 / LMG 19424 / R1) (Ralstonia taiwanensis (strain LMG 19424)).